A 308-amino-acid chain; its full sequence is Electron transfer flavoprotein subunit alpha (308 aa).

252–280 (LYVAVGISGAIQHLAGMKDSKVIVAINKD) contacts FAD.

It belongs to the ETF alpha-subunit/FixB family. In terms of assembly, heterodimer of an alpha and a beta subunit. FAD serves as cofactor.

The electron transfer flavoprotein serves as a specific electron acceptor for other dehydrogenases. It transfers the electrons to the main respiratory chain via ETF-ubiquinone oxidoreductase (ETF dehydrogenase). This Paracoccus denitrificans protein is Electron transfer flavoprotein subunit alpha (etfA).